A 298-amino-acid chain; its full sequence is tRNA pseudouridine synthase B (298 aa).

The active-site Nucleophile is the Asp-42.

This sequence belongs to the pseudouridine synthase TruB family. Type 1 subfamily.

It carries out the reaction uridine(55) in tRNA = pseudouridine(55) in tRNA. Its function is as follows. Responsible for synthesis of pseudouridine from uracil-55 in the psi GC loop of transfer RNAs. The polypeptide is tRNA pseudouridine synthase B (Mycobacterium tuberculosis (strain CDC 1551 / Oshkosh)).